The chain runs to 408 residues: 5-hydroxytryptamine receptor 1A (408 aa).

Residues 1–32 (MDASNNTTSWNILQRGRMGPSWRRCPVSYQII) lie on the Extracellular side of the membrane. N-linked (GlcNAc...) asparagine glycosylation is found at Asn5 and Asn6. A helical membrane pass occupies residues 33–53 (ASLFLGRSFSAGIFGNACVIA). The Cytoplasmic portion of the chain corresponds to 54–67 (AIALERSLQNVANY). A helical membrane pass occupies residues 68–92 (LIGSLAVTDLMVSVLVLPMAAQNQV). The Extracellular segment spans residues 93–101 (LNKWTLGQV). Residues 102–126 (TCDIFISLDVLCCTSSILHLCAIAL) form a helical membrane-spanning segment. A disulfide bond links Cys103 and Cys181. The serotonin site is built by Asp110 and Cys114. The short motif at 127–129 (DRY) is the DRY motif; important for ligand-induced conformation changes element. At 127–146 (DRYWAITDPIDYVNKRTPRR) the chain is on the cytoplasmic side. The helical transmembrane segment at 147 to 168 (AAVLISITWIVGFSISIPPMLG) threads the bilayer. Residues 169 to 187 (WRTPEDRSDPNACRISEDP) lie on the Extracellular side of the membrane. Residues 188–210 (GYTIYSTFGAFYIPLILMLVLYG) traverse the membrane as a helical segment. The Cytoplasmic segment spans residues 211 to 333 (KIFKAARFRI…LARERKTVKT (123 aa)). Positions 235–255 (TCLSVSQQSPKEKQRGAQQEL) are disordered. 1D-myo-inositol 4-phosphate is bound by residues Lys332, Thr333, and Gly339. The chain crosses the membrane as a helical span at residues 334–357 (LGIIMGTFILCWLPFFIVALVLPF). At 358-364 (CETCHMP) the chain is on the extracellular side. A helical transmembrane segment spans residues 365 to 389 (HLLFDIITWLGYSNSLLNPIIYAYF). The NPxxY motif; important for ligand-induced conformation changes and signaling signature appears at 382–386 (NPIIY). The 1D-myo-inositol 4-phosphate site is built by Phe389, Asn390, and Lys391. Topologically, residues 390-408 (NKDFQSAFKKIIKCKFCRQ) are cytoplasmic.

The protein belongs to the G-protein coupled receptor 1 family. 5-hydroxytryptamine receptor subfamily. HTR1A sub-subfamily. In terms of tissue distribution, first expressed in the rostral part of the brain stem at stage 22. At later stages of development, expression is localized to serotonergic neurons. The expression pattern changes in the tadpole of stage 41 where, in addition to serotonergic neurons, expression is also localized to the inner nuclear layer (INL) of the developing retina. This expression pattern continues through to the start of metamorphosis (stage 46). In adults, expressed in the brain, in particular the telencephalon, diencephalon and mesencephalon. In the telencephalic region, expression is localized to the lateral, dorsal and medial pallium, and in the striatum, septum and amygdala. In the mesencephalic region, expression is strongest in the optic tectum and torus semicircularis with moderate levels of expression in tegmental nuclei. In diencephalon, localized to the dorsal and ventral thalamus and the preoptic area of the hypothalamus.

It localises to the cell membrane. With respect to regulation, G-protein coupled receptor activity is regulated by lipids: phosphatidylinositol 4-phosphate increases HTR1A-mediated activity. G-protein coupled receptor for 5-hydroxytryptamine (serotonin). Also functions as a receptor for various drugs and psychoactive substances. Ligand binding causes a conformation change that triggers signaling via guanine nucleotide-binding proteins (G proteins) and modulates the activity of downstream effectors, such as adenylate cyclase. HTR1A is coupled to G(i)/G(o) G alpha proteins and mediates inhibitory neurotransmission: signaling inhibits adenylate cyclase activity and activates a phosphatidylinositol-calcium second messenger system that regulates the release of Ca(2+) ions from intracellular stores. Beta-arrestin family members regulate signaling by mediating both receptor desensitization and resensitization processes. Activation of the receptor may play a role in the exit from G0 phase and in promoting DNA synthesis. The protein is 5-hydroxytryptamine receptor 1A of Xenopus laevis (African clawed frog).